The sequence spans 127 residues: Large ribosomal subunit protein bL20 (127 aa).

This sequence belongs to the bacterial ribosomal protein bL20 family.

Its function is as follows. Binds directly to 23S ribosomal RNA and is necessary for the in vitro assembly process of the 50S ribosomal subunit. It is not involved in the protein synthesizing functions of that subunit. The polypeptide is Large ribosomal subunit protein bL20 (Streptomyces griseus subsp. griseus (strain JCM 4626 / CBS 651.72 / NBRC 13350 / KCC S-0626 / ISP 5235)).